We begin with the raw amino-acid sequence, 734 residues long: Meiotic driver SPOK1 (734 aa).

Residues 4 to 41 adopt a coiled-coil conformation; it reads KDRIAQLLRELEEAKARVEEAKAREAQERCEKERLQLE. Disordered stretches follow at residues 180–222 and 414–499; these read ELTQ…ICSN and LSSA…MADP. Over residues 416–429 the composition is skewed to polar residues; that stretch reads SAPSSQNTDISEYT. A compositionally biased stretch (basic and acidic residues) spans 457-468; it reads NEHDEHDEDHSE.

Its subcellular location is the cytoplasm. It localises to the nucleus. In terms of biological role, promotes unequal transmission of alleles from the parental zygote to progeny spores by acting as poison/antidote system, leading to poisoning of progeny that do not inherit the allele. May possess DNA nuclease activity that leads to spore killing, and a kinase activity that confers resistance to the nuclease activity. Can suppress meiotic drive by the P.anserina SPOK2, SPOK3 and SPOK4 proteins. The protein is Meiotic driver SPOK1 of Podospora comata.